The sequence spans 808 residues: Phenylalanine--tRNA ligase beta subunit (808 aa).

One can recognise a tRNA-binding domain in the interval 40–149 (RPELDFVKIV…DQAEVGKTIR (110 aa)). Positions 407-484 (HKEVRIHTDI…RTKGYDTIQV (78 aa)) constitute a B5 domain. Residues Asp462, Asp468, Glu471, and Glu472 each contribute to the Mg(2+) site. The FDX-ACB domain occupies 716–808 (SQFPEAEIDL…LAGKNGFVLR (93 aa)).

Belongs to the phenylalanyl-tRNA synthetase beta subunit family. Type 1 subfamily. In terms of assembly, tetramer of two alpha and two beta subunits. It depends on Mg(2+) as a cofactor.

Its subcellular location is the cytoplasm. The enzyme catalyses tRNA(Phe) + L-phenylalanine + ATP = L-phenylalanyl-tRNA(Phe) + AMP + diphosphate + H(+). The protein is Phenylalanine--tRNA ligase beta subunit of Leptospira interrogans serogroup Icterohaemorrhagiae serovar Lai (strain 56601).